Here is a 441-residue protein sequence, read N- to C-terminus: Damage-control phosphatase ARMT1 (441 aa).

Residue Ala-2 is modified to N-acetylalanine. Residue Lys-40 is modified to N6-acetyllysine. The residue at position 102 (Ser-102) is a Phosphoserine. 2 residues coordinate Mn(2+): Asp-253 and Asn-254. Position 253 to 254 (Asp-253 to Asn-254) interacts with substrate. S-adenosyl-L-methionine is bound by residues Glu-258 and Asp-291. Asp-291 is a binding site for Mn(2+). Residues Asp-367 to Arg-371 and Lys-404 each bind substrate. Residues Arg-401–Lys-404 carry the Subfamily III RTxK motif motif.

It belongs to the damage-control phosphatase family. Sugar phosphate phosphatase III subfamily. Mn(2+) is required as a cofactor. It depends on Ni(2+) as a cofactor. In terms of processing, automethylated.

The catalysed reaction is beta-D-fructose 1-phosphate + H2O = D-fructose + phosphate. It carries out the reaction beta-D-fructose 6-phosphate = dihydroxyacetone + D-glyceraldehyde 3-phosphate. It catalyses the reaction L-glutamyl-[protein] + S-adenosyl-L-methionine = [protein]-L-glutamate 5-O-methyl ester + S-adenosyl-L-homocysteine. Functionally, metal-dependent phosphatase that shows phosphatase activity against several substrates, including fructose-1-phosphate and fructose-6-phosphate. Its preference for fructose-1-phosphate, a strong glycating agent that causes DNA damage rather than a canonical yeast metabolite, suggests a damage-control function in hexose phosphate metabolism. Has also been shown to have O-methyltransferase activity that methylates glutamate residues of target proteins to form gamma-glutamyl methyl ester residues. Possibly methylates PCNA, suggesting it is involved in the DNA damage response. This is Damage-control phosphatase ARMT1 from Homo sapiens (Human).